The chain runs to 316 residues: uncharacterized protein (316 aa).

At 1-70 the chain is on the cytoplasmic side; the sequence is SFAYSGNSES…NNDEIGIWNY (70 aa). Residues 71-91 form a helical membrane-spanning segment; sequence ISVAEMGGVLLFLSYWIWTCL. His-92 is a topological domain (lumenal). The helical transmembrane segment at 93-113 threads the bilayer; it reads FSKIIFPAQKVICLYIFLFAL. Over 114–170 the chain is Cytoplasmic; sequence NQTLQECIEEYVFSSECIKYRQFYSVYEIIDFLRTNFYRLFVIYCALGFGITRTVPK. Residues 171–191 form a helical membrane-spanning segment; that stretch reads YLMIKGISIVIALCSVYWISL. The Lumenal portion of the chain corresponds to 192–194; sequence YKD. Residues 195–215 traverse the membrane as a helical segment; the sequence is VYVVSEIFDMIQYEVSPAIWV. The Cytoplasmic portion of the chain corresponds to 216 to 245; sequence YSICHLLKQCTSVTTYENASKARFFRRMLN. A helical membrane pass occupies residues 246 to 266; it reads AFIFIFCASPMLHYLSNIIFG. Residues 267–316 lie on the Lumenal side of the membrane; it reads NFDYRLSVIIGDLFTFMEKIAFPCYIMFPTHNEALAYNRNVAEEAQEKMI.

This sequence belongs to the UPF0742 family.

Its subcellular location is the endoplasmic reticulum. The protein resides in the membrane. This is an uncharacterized protein from Schizosaccharomyces pombe (strain 972 / ATCC 24843) (Fission yeast).